The following is a 355-amino-acid chain: Natterin-1 (355 aa).

A signal peptide spans 1-18; the sequence is MIPSVLLVTLLLLSWTSA. Residues 19-27 constitute a propeptide that is removed on maturation; sequence EKDLKVRVA.

The protein belongs to the natterin family. In terms of processing, contains 4 disulfide bonds. As to expression, expressed by the venom gland.

It is found in the secreted. With respect to regulation, inhibited by tissue-kallikrein inhibitor TKI and trasylol. Plasma kallikrein inhibitor PKSI527 and classical inhibitors of serine-, metallo-, thiol- or aspartate-peptidases evokes a minor inhibition of the peptide digestion. Its function is as follows. Shows nociceptive, edema-inducing and kininogenase activity with release of kallidin from low molecular weight kininogen. The cleavage occurs at Met-Lys bonds. This Thalassophryne nattereri (Copper Joe toadfish) protein is Natterin-1.